The chain runs to 20 residues: Cytolysin tenebrosin-A (20 aa).

Residues 3–12 are plays an important role in the hemolytic activity; sequence AVAGAVIEGA. The tract at residues 11-20 is N-terminal region; that stretch reads GATLTFEVLQ.

The protein belongs to the actinoporin family. Sea anemone subfamily. Octamer or nonamer in membranes. Monomer in the soluble state.

The protein localises to the secreted. It localises to the nematocyst. It is found in the target cell membrane. Functionally, pore-forming protein that forms cations-selective hydrophilic pores of around 1 nm and causes cardiac stimulation and cytolysis. Pore formation is a multi-step process that involves specific recognition of membrane sphingomyelin (but neither cholesterol nor phosphatidylcholine) using aromatic rich region and adjacent phosphocholine (POC) binding site, firm binding to the membrane (mainly driven by hydrophobic interactions) accompanied by the transfer of the N-terminal region to the lipid-water interface and finally pore formation after oligomerization of monomers. In Actinia tenebrosa (Australian red waratah sea anemone), this protein is Cytolysin tenebrosin-A.